The chain runs to 257 residues: 5'-nucleotidase SurE (257 aa).

Residues D8, D9, S40, and N92 each contribute to the a divalent metal cation site.

The protein belongs to the SurE nucleotidase family. The cofactor is a divalent metal cation.

It localises to the cytoplasm. The enzyme catalyses a ribonucleoside 5'-phosphate + H2O = a ribonucleoside + phosphate. In terms of biological role, nucleotidase that shows phosphatase activity on nucleoside 5'-monophosphates. The protein is 5'-nucleotidase SurE of Rhizobium leguminosarum bv. trifolii (strain WSM2304).